Consider the following 207-residue polypeptide: Ribonuclease HII (207 aa).

The RNase H type-2 domain maps to 12–205; that stretch reads GLVVGIDEVG…IRNMIEAEAH (194 aa). A divalent metal cation is bound by residues aspartate 18, glutamate 19, and aspartate 114.

Belongs to the RNase HII family. Mn(2+) is required as a cofactor. It depends on Mg(2+) as a cofactor.

It localises to the cytoplasm. The catalysed reaction is Endonucleolytic cleavage to 5'-phosphomonoester.. In terms of biological role, endonuclease that specifically degrades the RNA of RNA-DNA hybrids. This chain is Ribonuclease HII, found in Gluconobacter oxydans (strain 621H) (Gluconobacter suboxydans).